The primary structure comprises 179 residues: MAKLHDYYKSSVVAELTKQFSYTSVMQVPRIEKITLNMGVGEAINDKKLLENAAADMATISGQKPLITKARKSVAGFKIREGYPIGCKVTLRGERMWEFLERLISIALPRVRDFRGVSAKSFDGRGNYSMGVREQIIFPEIDFDKVDRVRGLDITITTSAGTDEEGRALLAAFNFPFRK.

This sequence belongs to the universal ribosomal protein uL5 family. As to quaternary structure, part of the 50S ribosomal subunit; part of the 5S rRNA/L5/L18/L25 subcomplex. Contacts the 5S rRNA and the P site tRNA. Forms a bridge to the 30S subunit in the 70S ribosome.

Functionally, this is one of the proteins that bind and probably mediate the attachment of the 5S RNA into the large ribosomal subunit, where it forms part of the central protuberance. In the 70S ribosome it contacts protein S13 of the 30S subunit (bridge B1b), connecting the 2 subunits; this bridge is implicated in subunit movement. Contacts the P site tRNA; the 5S rRNA and some of its associated proteins might help stabilize positioning of ribosome-bound tRNAs. This is Large ribosomal subunit protein uL5 from Vibrio campbellii (strain ATCC BAA-1116).